We begin with the raw amino-acid sequence, 104 residues long: Small ribosomal subunit protein uS10 (104 aa).

It belongs to the universal ribosomal protein uS10 family. In terms of assembly, part of the 30S ribosomal subunit.

In terms of biological role, involved in the binding of tRNA to the ribosomes. In Thermoplasma acidophilum (strain ATCC 25905 / DSM 1728 / JCM 9062 / NBRC 15155 / AMRC-C165), this protein is Small ribosomal subunit protein uS10.